The sequence spans 67 residues: Small, acid-soluble spore protein B (67 aa).

Belongs to the alpha/beta-type SASP family.

Its function is as follows. SASP are bound to spore DNA. They are double-stranded DNA-binding proteins that cause DNA to change to an a-like conformation. They protect the DNA backbone from chemical and enzymatic cleavage and are thus involved in dormant spore's high resistance to UV light. This Bacillus subtilis (strain 168) protein is Small, acid-soluble spore protein B (sspB).